Consider the following 848-residue polypeptide: Aryl hydrocarbon receptor (848 aa).

The residue at position 1 (Met-1) is an N-acetylmethionine. Residues 1 to 10 (MNSSSANITY) constitute a propeptide that is removed on maturation. A compositionally biased stretch (polar residues) spans 1–10 (MNSSSANITY). The disordered stretch occupies residues 1–39 (MNSSSANITYASRKRRKPVQKTVKPIPAEGIKSNPSKRH). 2 consecutive short sequence motifs (nuclear localization signal) follow at residues 13-16 (RKRR) and 37-42 (KRHRDR). The bHLH domain occupies 27-80 (PAEGIKSNPSKRHRDRLNTELDRLASLLPFPQDVINKLDKLSVLRLSVSYLRAK). The DNA-binding stretch occupies residues 38-66 (RHRDRLNTELDRLASLLPFPQDVINKLDK). Required for maintaining the overall integrity of the AHR:ARNT heterodimer and its transcriptional activity stretches follow at residues 50–82 (LASLLPFPQDVINKLDKLSVLRLSVSYLRAKSF), 118–126 (LLQALNGFV), and 266–268 (FAI). The Nuclear export signal signature appears at 64 to 72 (LDKLSVLRL). One can recognise a PAS 1 domain in the interval 111–181 (NLQEGEFLLQ…RQLHWALNPS (71 aa)). Positions 275–342 (PSILEIRTKN…CAESHIRMIK (68 aa)) constitute a PAS 2 domain. In terms of domain architecture, PAC spans 348-386 (MIVFRLLTKNNRWTWVQSNARLLYKNGRPDYIIVTQRPL). The segment at 824-848 (TTHLQPLHHPSEARPFPDLTSSGFL) is disordered.

As to quaternary structure, homodimer. Heterodimer; efficient DNA binding requires dimerization with another bHLH protein. Interacts with ARNT; the heterodimer ARNT:AHR binds to core DNA sequence 5'-TGCGTG-3' within the dioxin response element (DRE) of target gene promoters and activates their transcription. Binds MYBBP1A. Interacts with coactivators including SRC-1, RIP140 and NOCA7, and with the corepressor SMRT. Interacts with NEDD8 and IVNS1ABP. Interacts with BMAL1. Interacts with HSP90AB1. Interacts with TIPARP; leading to mono-ADP-ribosylation of AHR and subsequent inhibition of AHR. In terms of processing, mono-ADP-ribosylated, leading to inhibit transcription activator activity of AHR. In terms of tissue distribution, expressed in all tissues tested including blood, brain, heart, kidney, liver, lung, pancreas and skeletal muscle. Expressed in retinal photoreceptors.

The protein localises to the cytoplasm. It is found in the nucleus. In terms of biological role, ligand-activated transcription factor that enables cells to adapt to changing conditions by sensing compounds from the environment, diet, microbiome and cellular metabolism, and which plays important roles in development, immunity and cancer. Upon ligand binding, translocates into the nucleus, where it heterodimerizes with ARNT and induces transcription by binding to xenobiotic response elements (XRE). Regulates a variety of biological processes, including angiogenesis, hematopoiesis, drug and lipid metabolism, cell motility and immune modulation. Xenobiotics can act as ligands: upon xenobiotic-binding, activates the expression of multiple phase I and II xenobiotic chemical metabolizing enzyme genes (such as the CYP1A1 gene). Mediates biochemical and toxic effects of halogenated aromatic hydrocarbons. Next to xenobiotics, natural ligands derived from plants, microbiota, and endogenous metabolism are potent AHR agonists. Tryptophan (Trp) derivatives constitute an important class of endogenous AHR ligands. Acts as a negative regulator of anti-tumor immunity: indoles and kynurenic acid generated by Trp catabolism act as ligand and activate AHR, thereby promoting AHR-driven cancer cell motility and suppressing adaptive immunity. Regulates the circadian clock by inhibiting the basal and circadian expression of the core circadian component PER1. Inhibits PER1 by repressing the CLOCK-BMAL1 heterodimer mediated transcriptional activation of PER1. The heterodimer ARNT:AHR binds to core DNA sequence 5'-TGCGTG-3' within the dioxin response element (DRE) of target gene promoters and activates their transcription. This Homo sapiens (Human) protein is Aryl hydrocarbon receptor.